We begin with the raw amino-acid sequence, 1802 residues long: Transposon Ty4-H Gag-Pol polyprotein (1802 aa).

Positions arginine 39–asparagine 115 form a coiled coil. The tract at residues asparagine 381–tyrosine 501 is ty4 protease. Residue aspartate 414 is the For protease activity; shared with dimeric partner of the active site. The integrase-type zinc finger-like stretch occupies residues alanine 539–cysteine 599. Positions threonine 619–proline 786 constitute an Integrase catalytic domain. Residues aspartate 630 and aspartate 695 each contribute to the Mg(2+) site. The disordered stretch occupies residues lysine 1223–lysine 1248. In terms of domain architecture, Reverse transcriptase Ty1/copia-type spans arginine 1375 to asparagine 1510. Residues aspartate 1383, aspartate 1462, aspartate 1463, aspartate 1644, glutamate 1686, and aspartate 1720 each contribute to the Mg(2+) site. In terms of domain architecture, RNase H Ty1/copia-type spans aspartate 1644 to lysine 1790.

As to quaternary structure, the protease is a homodimer, whose active site consists of two apposed aspartic acid residues. Proteolytically processed into capsid protein (CA), Ty4 protease (PR), integrase (IN) and reverse transcriptase/ribonuclease H (RT) proteins. Initially, virus-like particles (VLPs) are composed of the structural unprocessed proteins Gag and Gag-Pol, and also contain the host initiator methionine tRNA (tRNA(i)-Met) which serves as a primer for minus-strand DNA synthesis, and a dimer of genomic Ty RNA. Processing of the polyproteins occurs within the particle and proceeds by an ordered pathway, called maturation. First, the protease (PR) is released by autocatalytic cleavage of the Gag-Pol polyprotein, and this cleavage is a prerequisite for subsequent processing at the remaining sites to release the mature structural and catalytic proteins. Maturation takes place prior to the RT reaction and is required to produce transposition-competent VLPs.

It localises to the cytoplasm. Its subcellular location is the nucleus. It carries out the reaction DNA(n) + a 2'-deoxyribonucleoside 5'-triphosphate = DNA(n+1) + diphosphate. It catalyses the reaction Endonucleolytic cleavage to 5'-phosphomonoester.. Capsid protein (CA) is the structural component of the virus-like particle (VLP), forming the shell that encapsulates the retrotransposons dimeric RNA genome. Its function is as follows. The aspartyl protease (PR) mediates the proteolytic cleavages of the Gag and Gag-Pol polyproteins after assembly of the VLP. In terms of biological role, reverse transcriptase/ribonuclease H (RT) is a multifunctional enzyme that catalyzes the conversion of the retro-elements RNA genome into dsDNA within the VLP. The enzyme displays a DNA polymerase activity that can copy either DNA or RNA templates, and a ribonuclease H (RNase H) activity that cleaves the RNA strand of RNA-DNA heteroduplexes during plus-strand synthesis and hydrolyzes RNA primers. The conversion leads to a linear dsDNA copy of the retrotransposon that includes long terminal repeats (LTRs) at both ends. Functionally, integrase (IN) targets the VLP to the nucleus, where a subparticle preintegration complex (PIC) containing at least integrase and the newly synthesized dsDNA copy of the retrotransposon must transit the nuclear membrane. Once in the nucleus, integrase performs the integration of the dsDNA into the host genome. The sequence is that of Transposon Ty4-H Gag-Pol polyprotein (TY4B-H) from Saccharomyces cerevisiae (strain ATCC 204508 / S288c) (Baker's yeast).